The chain runs to 427 residues: Peptidase B (427 aa).

Mn(2+) is bound by residues K195 and D200. K207 is a catalytic residue. Mn(2+)-binding residues include D218, D277, and E279. R281 is a catalytic residue.

It belongs to the peptidase M17 family. Homohexamer. Mn(2+) is required as a cofactor.

Its subcellular location is the cytoplasm. It catalyses the reaction Release of an N-terminal amino acid, Xaa, from a peptide or arylamide. Xaa is preferably Glu or Asp but may be other amino acids, including Leu, Met, His, Cys and Gln.. In terms of biological role, probably plays an important role in intracellular peptide degradation. The sequence is that of Peptidase B from Salmonella agona (strain SL483).